We begin with the raw amino-acid sequence, 769 residues long: Metal transporter CNNM4 (769 aa).

The Extracellular segment spans residues 1–175 (MAASAGCYYG…RLRVLEEEKP (175 aa)). N99 and N115 each carry an N-linked (GlcNAc...) asparagine glycan. The 181-residue stretch at 175 to 355 (PLLPIWLQAC…EPYSGIVREE (181 aa)) folds into the CNNM transmembrane domain. Residues 176–196 (LLPIWLQACIIAVLLTLSGIF) form a helical membrane-spanning segment. Residues 197 to 237 (SGLNLGLMALDPMELRVVQRCGTEKEKRYASKIEPVRRKGN) lie on the Cytoplasmic side of the membrane. Positions 238 to 258 (YLLCSLLLGNVLVNTTLTALL) form an intramembrane region, helical. The Cytoplasmic segment spans residues 259 to 261 (DEL). The helical transmembrane segment at 262-282 (IGSGLAAVLASTTGIVVLGEI) threads the bilayer. Over 283-292 (VPQALCSRHG) the chain is Extracellular. Residues 293–313 (LAVGANTLWLTRIFMLLTFPV) traverse the membrane as a helical segment. Residues 314–769 (AYPVSRLLDC…SQHSLQHNAV (456 aa)) lie on the Cytoplasmic side of the membrane. CBS domains are found at residues 374 to 435 (MTKV…CTPL) and 442 to 508 (YSHP…ILDE). The tract at residues 717 to 769 (LMSSRLDSSPQSPEGGTRKPDSTLSERSEVLEDETTSLLNQRNSQHSLQHNAV) is disordered. Residues 721 to 730 (RLDSSPQSPE) show a composition bias toward polar residues. Residues 732–746 (GTRKPDSTLSERSEV) are compositionally biased toward basic and acidic residues. The span at 752–769 (TSLLNQRNSQHSLQHNAV) shows a compositional bias: polar residues.

Belongs to the ACDP family.

The protein localises to the cell membrane. Probable metal transporter. This Xenopus tropicalis (Western clawed frog) protein is Metal transporter CNNM4 (cnnm4).